We begin with the raw amino-acid sequence, 475 residues long: Phosphoglucosamine mutase (475 aa).

Ser126 (phosphoserine intermediate) is an active-site residue. Mg(2+)-binding residues include Ser126, Asp265, Asp267, and Asp269. A Phosphoserine modification is found at Ser126.

Belongs to the phosphohexose mutase family. Mg(2+) serves as cofactor. Activated by phosphorylation.

The enzyme catalyses alpha-D-glucosamine 1-phosphate = D-glucosamine 6-phosphate. Functionally, catalyzes the conversion of glucosamine-6-phosphate to glucosamine-1-phosphate. The chain is Phosphoglucosamine mutase from Synechococcus sp. (strain ATCC 27144 / PCC 6301 / SAUG 1402/1) (Anacystis nidulans).